A 178-amino-acid chain; its full sequence is Adenine phosphoribosyltransferase (178 aa).

The protein belongs to the purine/pyrimidine phosphoribosyltransferase family. As to quaternary structure, homodimer.

The protein resides in the cytoplasm. The enzyme catalyses AMP + diphosphate = 5-phospho-alpha-D-ribose 1-diphosphate + adenine. It participates in purine metabolism; AMP biosynthesis via salvage pathway; AMP from adenine: step 1/1. Its function is as follows. Catalyzes a salvage reaction resulting in the formation of AMP, that is energically less costly than de novo synthesis. This is Adenine phosphoribosyltransferase from Novosphingobium aromaticivorans (strain ATCC 700278 / DSM 12444 / CCUG 56034 / CIP 105152 / NBRC 16084 / F199).